We begin with the raw amino-acid sequence, 356 residues long: GTPase Obg (356 aa).

An Obg domain is found at 1 to 159 (MKFIDRVKIH…RWLRLELKLL (159 aa)). Residues 160-331 (ADVGLLGMPN…LVAEVARELE (172 aa)) enclose the OBG-type G domain. Residues 166–173 (GMPNAGKS), 191–195 (FTTLV), 213–216 (DIPG), 283–286 (SKID), and 312–314 (SAV) each bind GTP. The Mg(2+) site is built by S173 and T193.

Belongs to the TRAFAC class OBG-HflX-like GTPase superfamily. OBG GTPase family. As to quaternary structure, monomer. The cofactor is Mg(2+).

Its subcellular location is the cytoplasm. Functionally, an essential GTPase which binds GTP, GDP and possibly (p)ppGpp with moderate affinity, with high nucleotide exchange rates and a fairly low GTP hydrolysis rate. Plays a role in control of the cell cycle, stress response, ribosome biogenesis and in those bacteria that undergo differentiation, in morphogenesis control. This Syntrophotalea carbinolica (strain DSM 2380 / NBRC 103641 / GraBd1) (Pelobacter carbinolicus) protein is GTPase Obg.